The sequence spans 879 residues: mRNA-binding protein PUF3 (879 aa).

A Phosphothreonine modification is found at Thr-83. 2 positions are modified to phosphoserine: Ser-207 and Ser-210. Disordered stretches follow at residues 222-256 (ESDKNFNKLNRNTTNSGSLYHSSSNSGSSASLESE), 344-417 (PANE…QQQQ), and 443-512 (KKRN…QQTY). The span at 237 to 255 (SGSLYHSSSNSGSSASLES) shows a compositional bias: low complexity. Residues 370 to 395 (SSPPNNSPFPFAYPNPMMFMPPPPLS) show a composition bias toward pro residues. Low complexity-rich tracts occupy residues 398 to 417 (QQQQQQQQQQQQEDQQQQQQ), 449 to 463 (NHPANNSNNANKQAN), 472 to 491 (TKNTSKKNASSKSNESTANN), and 501 to 512 (HSQSLQQQQQTY). In terms of domain architecture, PUM-HD spans 513–871 (HRSPLLEQLR…RHLASVEKLA (359 aa)). 8 Pumilio repeats span residues 538 to 573 (DIFGHSLEFCKDQHGSRFIQRELATSPASEKEVIFN), 574 to 609 (EIRDDAIELSNDVFGNYVIQKFFEFGSKIQKNTLVD), 610 to 645 (QFKGNMKQLSLQMYACRVIQKALEYIDSNQRIELVL), 646 to 681 (ELSDSVLQMIKDQNGNHVIQKAIETIPIEKLPFILS), 682 to 717 (SLTGHIYHLSTHSYGCRVIQRLLEFGSSEDQESILN), 718 to 759 (ELKD…EIIE), 760 to 795 (TVANNVVEYSKHKFASNVVEKSILYGSKNQKDLIIS), and 807 to 844 (NLEDDSPMILMIKDQFANYVIQKLVNVSEGEGKKLIVI).

This sequence belongs to the PUF3 family.

Its subcellular location is the mitochondrion outer membrane. The protein localises to the cytoplasm. In terms of biological role, RNA-binding protein involved in post-transcriptional regulation. Negatively regulates expression of COX17 by binding to the 3'-UTR of COX17 mRNA. Promotes decay of COX17 mRNA by enhancing its rate of deadenylation and subsequent turnover. Predominantly binds to mRNAs encoding mitochondrial proteins and localizes them to the vicinity of mitochondria for translation. Regulates mitochondrial biogenesis, motility and morphology. The polypeptide is mRNA-binding protein PUF3 (PUF3) (Saccharomyces cerevisiae (strain ATCC 204508 / S288c) (Baker's yeast)).